The following is a 331-amino-acid chain: Peroxidase 60 (331 aa).

The first 26 residues, 1–26 (MAVKISTIEVLILSLALLSFGHGCYG), serve as a signal peptide directing secretion. 4 cysteine pairs are disulfide-bonded: cysteine 37-cysteine 113, cysteine 70-cysteine 75, cysteine 119-cysteine 321, and cysteine 198-cysteine 230. The Proton acceptor role is filled by histidine 68. 4 residues coordinate Ca(2+): aspartate 69, glycine 74, aspartate 76, and serine 78. Proline 161 lines the substrate pocket. Residue histidine 191 participates in heme b binding. Residue threonine 192 participates in Ca(2+) binding. N-linked (GlcNAc...) asparagine glycosylation occurs at asparagine 245. 2 residues coordinate Ca(2+): serine 248 and aspartate 253.

This sequence belongs to the peroxidase family. Classical plant (class III) peroxidase subfamily. Heme b serves as cofactor. Requires Ca(2+) as cofactor. As to expression, expressed in roots, slightly in leaves.

It localises to the secreted. It catalyses the reaction 2 a phenolic donor + H2O2 = 2 a phenolic radical donor + 2 H2O. Functionally, removal of H(2)O(2), oxidation of toxic reductants, biosynthesis and degradation of lignin, suberization, auxin catabolism, response to environmental stresses such as wounding, pathogen attack and oxidative stress. These functions might be dependent on each isozyme/isoform in each plant tissue. This chain is Peroxidase 60 (PER60), found in Arabidopsis thaliana (Mouse-ear cress).